A 469-amino-acid chain; its full sequence is Probable Xaa-Pro aminopeptidase PEPP (469 aa).

Mn(2+)-binding residues include aspartate 264, aspartate 275, glutamate 398, and glutamate 438.

The protein belongs to the peptidase M24B family. The cofactor is Mn(2+).

The catalysed reaction is Release of any N-terminal amino acid, including proline, that is linked to proline, even from a dipeptide or tripeptide.. Catalyzes the removal of a penultimate prolyl residue from the N-termini of peptides. This Ajellomyces capsulatus (strain G186AR / H82 / ATCC MYA-2454 / RMSCC 2432) (Darling's disease fungus) protein is Probable Xaa-Pro aminopeptidase PEPP (PEPP).